The sequence spans 83 residues: uncharacterized protein (83 aa).

3 helical membrane passes run 7-26, 36-58, and 65-82; these read FARFVEYSFFAVFAALIVSY, LSPLLVFLLTLIPAIGLILILPF, and ILTVAVLIEMAVALYLAF.

The protein resides in the cell membrane. This is an uncharacterized protein from Archaeoglobus fulgidus (strain ATCC 49558 / DSM 4304 / JCM 9628 / NBRC 100126 / VC-16).